The sequence spans 766 residues: MALAHNLGFPRIGRDRELKKAQEAFWKGELDEAGLRKVGRDLRAAHWQAQKDAGIELLPVGDFAWYDQVLTHSLTFGVIPERFRGHDGAKPTLQTLFAMARGVATGRSANCCGGAHAQEMTKWFDTNYHYLVPEFTVDQQFALSWEQLFEEVDEAKALGHAAKPVVIGPLTYLWLGKAKGGDFDKLELLDRLLPVYDEILNRLAGQGVEWVQIDEPILVLDLPQEWKNAYERVYNILQRAPLKKLVATYFGGLEENLGLAANLPVDGLHIDLVRAPEQYPTILDRLPAYKILSLGLVNGRNVWACDLEKAVDVLRHAAERLGDRLWVAPSCSLLHSPVDLGREDQLDTELKSWLAFAVQKCQEVAVLAKAVNQPDAAEVAAALARSRAIQAGRASSPRIHKPAVQARVHAIKPGDSQRQSAFGQRIAKQRAGLNLPAYPTTTIGSFPQTPAIRLARQAFKQGKLTEADYVEAMHSEIRHAVQIQENLGLDVLVHGEAERNDMVEYFAEQLDGYVFTRFGWVQSYGSRCVKPAVIYGDLSRPEAMTVAWIRYAQGLTRKVMKGMLTGPVTMLMWSFPREDVSRETQARQLALAIRDEVLDLEAADIKIVQIDEAAFREGLPLRRSAWPAYLEWATEAFRLCASGVRDETQIHTHMCYSEFNDVIESIAAMDADVITIETSRSDMELLEAFEKFDYPNEIGPGVYDIHSPRVPSREEMVKLLRKAALRIPAERLWVNPDCGLKTRAWPETEAALVNMVAAARELRATA.

Residues 16 to 19 (RELK) and Lys122 contribute to the 5-methyltetrahydropteroyltri-L-glutamate site. Residues 443–445 (IGS) and Glu496 contribute to the L-homocysteine site. Residues 443–445 (IGS) and Glu496 contribute to the L-methionine site. 5-methyltetrahydropteroyltri-L-glutamate is bound by residues 527 to 528 (RC) and Trp573. Asp611 contacts L-homocysteine. Asp611 is a binding site for L-methionine. Glu617 provides a ligand contact to 5-methyltetrahydropteroyltri-L-glutamate. Zn(2+) is bound by residues His653, Cys655, and Glu677. Residue His706 is the Proton donor of the active site. Residue Cys738 participates in Zn(2+) binding.

Belongs to the vitamin-B12 independent methionine synthase family. It depends on Zn(2+) as a cofactor.

The catalysed reaction is 5-methyltetrahydropteroyltri-L-glutamate + L-homocysteine = tetrahydropteroyltri-L-glutamate + L-methionine. The protein operates within amino-acid biosynthesis; L-methionine biosynthesis via de novo pathway; L-methionine from L-homocysteine (MetE route): step 1/1. Its function is as follows. Catalyzes the transfer of a methyl group from 5-methyltetrahydrofolate to homocysteine resulting in methionine formation. The chain is 5-methyltetrahydropteroyltriglutamate--homocysteine methyltransferase from Pseudomonas putida (strain W619).